We begin with the raw amino-acid sequence, 294 residues long: Bifunctional protein FolD (294 aa).

NADP(+) is bound by residues 175–177 (GAS) and I241.

The protein belongs to the tetrahydrofolate dehydrogenase/cyclohydrolase family. In terms of assembly, homodimer.

The enzyme catalyses (6R)-5,10-methylene-5,6,7,8-tetrahydrofolate + NADP(+) = (6R)-5,10-methenyltetrahydrofolate + NADPH. It carries out the reaction (6R)-5,10-methenyltetrahydrofolate + H2O = (6R)-10-formyltetrahydrofolate + H(+). The protein operates within one-carbon metabolism; tetrahydrofolate interconversion. Functionally, catalyzes the oxidation of 5,10-methylenetetrahydrofolate to 5,10-methenyltetrahydrofolate and then the hydrolysis of 5,10-methenyltetrahydrofolate to 10-formyltetrahydrofolate. The protein is Bifunctional protein FolD of Hahella chejuensis (strain KCTC 2396).